Here is a 154-residue protein sequence, read N- to C-terminus: Transcriptional repressor NrdR (154 aa).

The segment at 3–34 is a zinc-finger region; it reads CPFCAHPDTRVADSRLMEERNAVRRRRHCPNC. Positions 49–139 constitute an ATP-cone domain; sequence PAVIGPDKKR…LHKRFDNPAD (91 aa).

Belongs to the NrdR family. Zn(2+) serves as cofactor.

Its function is as follows. Negatively regulates transcription of bacterial ribonucleotide reductase nrd genes and operons by binding to NrdR-boxes. This chain is Transcriptional repressor NrdR, found in Neisseria meningitidis serogroup B (strain ATCC BAA-335 / MC58).